The chain runs to 500 residues: ADP,ATP carrier protein 5 (500 aa).

Transmembrane regions (helical) follow at residues leucine 26 to leucine 46, isoleucine 62 to tyrosine 82, isoleucine 94 to tyrosine 114, tyrosine 149 to tryptophan 169, phenylalanine 184 to methionine 204, isoleucine 224 to leucine 244, leucine 287 to valine 307, leucine 328 to methionine 348, alanine 357 to phenylalanine 377, isoleucine 381 to glycine 401, and serine 469 to valine 489.

Belongs to the ADP/ATP translocase tlc family.

The protein resides in the cell membrane. Functionally, provides the rickettsial cell with host ATP in exchange for rickettsial ADP. This is an obligate exchange system. This energy acquiring activity is an important component of rickettsial parasitism. The sequence is that of ADP,ATP carrier protein 5 (tlcE) from Rickettsia prowazekii (strain Madrid E).